The chain runs to 172 residues: Shikimate kinase (172 aa).

Residue 11 to 16 (GAGKST) participates in ATP binding. S15 contributes to the Mg(2+) binding site. Positions 33, 57, and 79 each coordinate substrate. R117 is a binding site for ATP. R136 is a substrate binding site. R153 is a binding site for ATP.

The protein belongs to the shikimate kinase family. As to quaternary structure, monomer. Mg(2+) is required as a cofactor.

The protein localises to the cytoplasm. The enzyme catalyses shikimate + ATP = 3-phosphoshikimate + ADP + H(+). Its pathway is metabolic intermediate biosynthesis; chorismate biosynthesis; chorismate from D-erythrose 4-phosphate and phosphoenolpyruvate: step 5/7. Functionally, catalyzes the specific phosphorylation of the 3-hydroxyl group of shikimic acid using ATP as a cosubstrate. The protein is Shikimate kinase of Pseudomonas savastanoi pv. phaseolicola (strain 1448A / Race 6) (Pseudomonas syringae pv. phaseolicola (strain 1448A / Race 6)).